Here is a 433-residue protein sequence, read N- to C-terminus: Trigger factor (433 aa).

Residues glycine 163 to proline 248 form the PPIase FKBP-type domain.

This sequence belongs to the FKBP-type PPIase family. Tig subfamily.

It is found in the cytoplasm. The enzyme catalyses [protein]-peptidylproline (omega=180) = [protein]-peptidylproline (omega=0). Involved in protein export. Acts as a chaperone by maintaining the newly synthesized protein in an open conformation. Functions as a peptidyl-prolyl cis-trans isomerase. This Nitratidesulfovibrio vulgaris (strain DP4) (Desulfovibrio vulgaris) protein is Trigger factor.